The sequence spans 181 residues: Calmodulin-like protein 6 (181 aa).

4 EF-hand domains span residues 33-68, 69-104, 107-142, and 143-178; these read EQIK…LGIN, PTKS…YHEK, NQES…AGEP, and LNEV…ESFK. Ca(2+) is bound by residues Asp-156, Asp-158, Asp-160, Thr-162, and Glu-167.

The protein belongs to the calmodulin family. Calglandulin subfamily. As to expression, expressed in prostate, thymus, heart, skeleton muscle, bone marrow and ovary.

The protein resides in the cytoplasm. It is found in the nucleus. The polypeptide is Calmodulin-like protein 6 (CALML6) (Homo sapiens (Human)).